The sequence spans 802 residues: Penicillin G acylase (802 aa).

An N-terminal signal peptide occupies residues 1-26 (MKMKWLISVIILFVFIFPQNLVFAGE). Position 177 (glutamate 177) interacts with Ca(2+). Residues 235–265 (SAVIKASEKVGKERENFVQSSEELGLPLKIG) constitute a propeptide, spacer peptide. The active-site Nucleophile is the serine 266. Position 341 (aspartate 341) interacts with Ca(2+).

Belongs to the peptidase S45 family. Heterodimer of an alpha subunit and a beta subunit processed from the same precursor. Ca(2+) is required as a cofactor.

Its subcellular location is the secreted. The catalysed reaction is a penicillin + H2O = 6-aminopenicillanate + a carboxylate. This chain is Penicillin G acylase (pac), found in Rhizobium viscosum (Arthrobacter viscosus).